A 332-amino-acid polypeptide reads, in one-letter code: Biotin synthase (332 aa).

One can recognise a Radical SAM core domain in the interval 53–282 (YFGKKVKLNM…TKEIRISGGR (230 aa)). The [4Fe-4S] cluster site is built by C71, C75, and C78. The [2Fe-2S] cluster site is built by C115, C147, C207, and R277.

The protein belongs to the radical SAM superfamily. Biotin synthase family. In terms of assembly, homodimer. Requires [4Fe-4S] cluster as cofactor. [2Fe-2S] cluster serves as cofactor.

The enzyme catalyses (4R,5S)-dethiobiotin + (sulfur carrier)-SH + 2 reduced [2Fe-2S]-[ferredoxin] + 2 S-adenosyl-L-methionine = (sulfur carrier)-H + biotin + 2 5'-deoxyadenosine + 2 L-methionine + 2 oxidized [2Fe-2S]-[ferredoxin]. Its pathway is cofactor biosynthesis; biotin biosynthesis; biotin from 7,8-diaminononanoate: step 2/2. Catalyzes the conversion of dethiobiotin (DTB) to biotin by the insertion of a sulfur atom into dethiobiotin via a radical-based mechanism. This chain is Biotin synthase, found in Bacillus anthracis.